Here is a 333-residue protein sequence, read N- to C-terminus: Glycerol-3-phosphate dehydrogenase [NAD(P)+] (333 aa).

Positions 13, 33, and 108 each coordinate NADPH. K108 and G138 together coordinate sn-glycerol 3-phosphate. S142 contacts NADPH. Residues K193, D246, S256, R257, and N258 each contribute to the sn-glycerol 3-phosphate site. The active-site Proton acceptor is K193. R257 serves as a coordination point for NADPH. V281 and E283 together coordinate NADPH.

Belongs to the NAD-dependent glycerol-3-phosphate dehydrogenase family.

It is found in the cytoplasm. It carries out the reaction sn-glycerol 3-phosphate + NAD(+) = dihydroxyacetone phosphate + NADH + H(+). The catalysed reaction is sn-glycerol 3-phosphate + NADP(+) = dihydroxyacetone phosphate + NADPH + H(+). It participates in membrane lipid metabolism; glycerophospholipid metabolism. Catalyzes the reduction of the glycolytic intermediate dihydroxyacetone phosphate (DHAP) to sn-glycerol 3-phosphate (G3P), the key precursor for phospholipid synthesis. The polypeptide is Glycerol-3-phosphate dehydrogenase [NAD(P)+] (Bifidobacterium longum (strain DJO10A)).